A 337-amino-acid chain; its full sequence is uncharacterized protein (337 aa).

The AFP-like domain maps to S279–D337.

It to B.subtilis SpsE.

This is an uncharacterized protein from Methanocaldococcus jannaschii (strain ATCC 43067 / DSM 2661 / JAL-1 / JCM 10045 / NBRC 100440) (Methanococcus jannaschii).